We begin with the raw amino-acid sequence, 218 residues long: Leucine-rich repeat protein 2 (218 aa).

The signal sequence occupies residues 1–27 (MVAQNSRRELLAASLILTLALIRLTEA). 5 LRR repeats span residues 69–93 (HHQV…LGKL), 94–117 (EHLQ…LGNL), 119–141 (SLIS…LGKL), 142–165 (KSLV…LTVI), and 167–190 (SLKV…PFEH).

In terms of biological role, probably involved in plant defense response. The polypeptide is Leucine-rich repeat protein 2 (Arabidopsis thaliana (Mouse-ear cress)).